We begin with the raw amino-acid sequence, 148 residues long: Cysteine proteinase inhibitor 5 (148 aa).

The N-terminal stretch at 1 to 25 is a signal peptide; sequence MASKLYYAVAPLVLVLLLLAPLSSA. The Secondary area of contact signature appears at 99–103; the sequence is QVVSG.

Belongs to the cystatin family. Phytocystatin subfamily.

Its subcellular location is the secreted. In terms of biological role, specific inhibitor of cysteine proteinases. Probably involved in the regulation of endogenous processes and in defense against pests and pathogens. This is Cysteine proteinase inhibitor 5 from Oryza sativa subsp. japonica (Rice).